The primary structure comprises 286 residues: MQFFKTLAALVSCISFVLAYVAQDVHVSFPSTAGKSRVMIGKVEPRIGIDETVPTTITVEDPNEVIQVNFAIESTNKPFQNTLLIGLPNKNLEMAFEPEIKDNGKLSMYKYRIDLAKLDAALLQEASRSPEPIKATLILASSTAKPKENLFREILQLNLNFDVDHSDSSLVDKFGIKPEIHHIFHAEPKRVAKPIAVIFVLIIFITILSLIVTWLNSCAAAFNNIPTGVTAVYFLGFIATIVGFEVIFARYYLGTSIFETLFSSLYLGAPGLLTSTKFLRSFGQTI.

The signal sequence occupies residues 1–19 (MQFFKTLAALVSCISFVLA). Residues 20-194 (YVAQDVHVSF…HAEPKRVAKP (175 aa)) lie on the Lumenal side of the membrane. The chain crosses the membrane as a helical span at residues 195–215 (IAVIFVLIIFITILSLIVTWL). The Cytoplasmic portion of the chain corresponds to 216-228 (NSCAAAFNNIPTG). Residues 229–249 (VTAVYFLGFIATIVGFEVIFA) form a helical membrane-spanning segment. The Lumenal portion of the chain corresponds to 250–252 (RYY). A helical transmembrane segment spans residues 253 to 273 (LGTSIFETLFSSLYLGAPGLL). The Cytoplasmic portion of the chain corresponds to 274-286 (TSTKFLRSFGQTI).

This sequence belongs to the SWP1 family. In terms of assembly, component of the oligosaccharyltransferase (OST) complex, which appears to exist in two assemblies comprising OST1, OST2, OST4, OST5, STT3, SWP1, WPB1, and either OST3 or OST6. OST assembly occurs through the formation of 3 subcomplexes. Subcomplex 1 contains OST1 and OST5, subcomplex 2 contains STT3, OST3, and OST4, and subcomplex 3 contains OST2, WBP1, and SWP1. Interacts with SEC61 and SSS1.

It localises to the endoplasmic reticulum membrane. The protein operates within protein modification; protein glycosylation. Subunit of the oligosaccharyl transferase (OST) complex that catalyzes the initial transfer of a defined glycan (Glc(3)Man(9)GlcNAc(2) in eukaryotes) from the lipid carrier dolichol-pyrophosphate to an asparagine residue within an Asn-X-Ser/Thr consensus motif in nascent polypeptide chains, the first step in protein N-glycosylation. N-glycosylation occurs cotranslationally and the complex associates with the Sec61 complex at the channel-forming translocon complex that mediates protein translocation across the endoplasmic reticulum (ER). All subunits are required for a maximal enzyme activity. The chain is Dolichyl-diphosphooligosaccharide--protein glycosyltransferase subunit SWP1 (SWP1) from Saccharomyces cerevisiae (strain ATCC 204508 / S288c) (Baker's yeast).